The chain runs to 199 residues: UPF0637 protein LACR_1918 (199 aa).

It belongs to the UPF0637 family.

This Lactococcus lactis subsp. cremoris (strain SK11) protein is UPF0637 protein LACR_1918.